The sequence spans 516 residues: GMP synthase [glutamine-hydrolyzing] (516 aa).

Positions 8–198 (KILILDFGSQ…VVNICGCDTL (191 aa)) constitute a Glutamine amidotransferase type-1 domain. The active-site Nucleophile is the C84. Residues H172 and E174 contribute to the active site. Positions 199–391 (WNIENIIEND…LGLPYNMLYR (193 aa)) constitute a GMPS ATP-PPase domain. 226–232 (SGGVDSS) provides a ligand contact to ATP.

In terms of assembly, homodimer.

It catalyses the reaction XMP + L-glutamine + ATP + H2O = GMP + L-glutamate + AMP + diphosphate + 2 H(+). Its pathway is purine metabolism; GMP biosynthesis; GMP from XMP (L-Gln route): step 1/1. Its function is as follows. Catalyzes the synthesis of GMP from XMP. The chain is GMP synthase [glutamine-hydrolyzing] from Francisella tularensis subsp. holarctica (strain FTNF002-00 / FTA).